Reading from the N-terminus, the 353-residue chain is Vomeronasal type-1 receptor 1 (353 aa).

Over 1–56 (MVGDTLKLLSPLMTRYFFLLFYSTDSSDLNENQHPLDFDEMAFGKVKSGISFLIQT) the chain is Extracellular. The helical transmembrane segment at 57–77 (GVGILGNSFLLCFYNLILFTG) threads the bilayer. Topologically, residues 78–84 (HKLRPTD) are cytoplasmic. Residues 85–105 (LILSHLALANSMVLFFKGIPQ) traverse the membrane as a helical segment. At 106–132 (TMAAFGLKYLLNDTGCKFVFYYHRVGT) the chain is on the extracellular side. Asn-117 carries N-linked (GlcNAc...) asparagine glycosylation. The chain crosses the membrane as a helical span at residues 133–153 (RVSLSTICLLNGFQAIKLNPS). Residues 154 to 169 (ICRWMEIKIRSPRFID) are Cytoplasmic-facing. Residues 170-190 (FCCLLCWVPHVLMNASVLLLV) traverse the membrane as a helical segment. The Extracellular segment spans residues 191–226 (NGPLNSKNSSAKNNYGYCSYKASKRFSSLHAVLYFS). N-linked (GlcNAc...) asparagine glycosylation is present at Asn-198. A helical transmembrane segment spans residues 227-247 (PDFMSLGFMVWASGSMVFFLY). Residues 248–274 (RHKQQVQHNHSNRLSCRPSQETRATRT) are Cytoplasmic-facing. A helical transmembrane segment spans residues 275–295 (IMVLVSSFFVFYSVHSFLTIW). Residues 296-303 (TTVVANPG) are Extracellular-facing. The helical transmembrane segment at 304–324 (QWIVNNSVLVASYFPSRSPFV) threads the bilayer. At 325-353 (LIMSDTRISQFCFACRTRKTLFPNLVVMP) the chain is on the cytoplasmic side.

This sequence belongs to the G-protein coupled receptor 1 family.

It localises to the cell membrane. Putative pheromone receptor. This Gorilla gorilla gorilla (Western lowland gorilla) protein is Vomeronasal type-1 receptor 1 (VN1R1).